The chain runs to 397 residues: Succinyl-diaminopimelate desuccinylase (397 aa).

Position 73 (H73) interacts with Zn(2+). D75 is a catalytic residue. A Zn(2+)-binding site is contributed by D106. Catalysis depends on E140, which acts as the Proton acceptor. The Zn(2+) site is built by E141, E169, and H366.

The protein belongs to the peptidase M20A family. DapE subfamily. As to quaternary structure, homodimer. The cofactor is Zn(2+). Co(2+) is required as a cofactor.

The enzyme catalyses N-succinyl-(2S,6S)-2,6-diaminopimelate + H2O = (2S,6S)-2,6-diaminopimelate + succinate. It functions in the pathway amino-acid biosynthesis; L-lysine biosynthesis via DAP pathway; LL-2,6-diaminopimelate from (S)-tetrahydrodipicolinate (succinylase route): step 3/3. In terms of biological role, catalyzes the hydrolysis of N-succinyl-L,L-diaminopimelic acid (SDAP), forming succinate and LL-2,6-diaminopimelate (DAP), an intermediate involved in the bacterial biosynthesis of lysine and meso-diaminopimelic acid, an essential component of bacterial cell walls. The chain is Succinyl-diaminopimelate desuccinylase from Rhizobium meliloti (strain 1021) (Ensifer meliloti).